The sequence spans 420 residues: MPHSLFSTDTDLTAENLLRLPAEFGCPVWVYDAQIIRRQIAALKQFDVVRFAQKACSNIHILRLMREQGVKVDSVSLGEIERALAAGYNPQTHPDDIVFTADVIDQATLERVSELQIPVNAGSVDMLDQLGQVSPGHRVWLRVNPGFGHGHSQKTNTGGENSKHGIWYTDLPAALDVIQRHHLQLVGIHMHIGSGVDYAHLEQVCGAMVRQVIEFGQDLQAISAGGGLSVPYQQGEEAVDTEHYYGLWNAAREQIARHLGHPVKLEIEPGRFLVAQSGVLITQVRSVKQMGSRHFVLVDAGFNDLMRPAMYGSYHHISALAADGRSLEHAPTVETVVAGPLCESGDVFTQQEGGNVETRALPEVKAGDYLVLHDTGAYGASMSSNYNSRPLLPEVLFDNGQARLIRRRQTIEELLALELL.

An N6-(pyridoxal phosphate)lysine modification is found at Lys-54. Substrate is bound at residue His-191. Pyridoxal 5'-phosphate contacts are provided by residues Gly-227 and 268–271; that span reads EPGR. Residues Arg-271, Arg-307, and Tyr-311 each contribute to the substrate site. Cys-342 (proton donor) is an active-site residue. The substrate site is built by Glu-343 and Tyr-378. Pyridoxal 5'-phosphate is bound at residue Tyr-378.

The protein belongs to the Orn/Lys/Arg decarboxylase class-II family. LysA subfamily. Pyridoxal 5'-phosphate is required as a cofactor.

The enzyme catalyses meso-2,6-diaminopimelate + H(+) = L-lysine + CO2. It participates in amino-acid biosynthesis; L-lysine biosynthesis via DAP pathway; L-lysine from DL-2,6-diaminopimelate: step 1/1. With respect to regulation, is activated by 2,3-dimercaptopropan-1-ol. Specifically catalyzes the decarboxylation of meso-diaminopimelate (meso-DAP) to L-lysine. Is not active against the DD- or LL-isomers of diaminopimelate. The polypeptide is Diaminopimelate decarboxylase (Escherichia coli (strain K12)).